The sequence spans 547 residues: Agglutinin-1 (547 aa).

The first 20 residues, 1 to 20 (MKFETTKNKLHGNAYYQAQF), serve as a signal peptide directing secretion. Gln21 is modified (pyrrolidone carboxylic acid). Glu183 is an active-site residue. Cystine bridges form between Cys266-Cys288, Cys305-Cys324, and Cys348-Cys365. The propeptide at 279 to 280 (RS) is linker peptide. One can recognise a Ricin B-type lectin 1 domain in the interval 292–419 (YEPTVRIGGR…YRMRQGWRTG (128 aa)). The stretch at 302–344 (DGLCVDVSDNAYNNGNPIILWKCKDQLEVNQLWTLKSDKTIRS) is one 1-alpha repeat. The 1-beta repeat unit spans residues 345-385 (KGKCLTTYGYAPGNYVMIYDCSSAVAEATYWDIWDNGTIIN). N-linked (GlcNAc...) asparagine glycosylation is found at Asn380 and Asn420. The 1-gamma repeat unit spans residues 388–420 (SGLVLSAESSSMGGTLTVQKNDYRMRQGWRTGN). The 125-residue stretch at 422–546 (TSPFVTSIAG…GNANQMWATL (125 aa)) folds into the Ricin B-type lectin 2 domain. A 2-alpha repeat occupies 433–468 (FKLCMEAHGNSMWLDVCDITKEEQQWAVYPDGSIRP). 2 disulfides stabilise this stretch: Cys436-Cys449 and Cys475-Cys492. A 2-beta repeat occupies 472–511 (TNNCLTCEEHKQGATIVMMGCSNAWASQRWVFKSDGTIYN). The stretch at 514-547 (DDMVMDVKSSDPSLKQIILWPYTGNANQMWATLF) is one 2-gamma repeat.

This sequence in the N-terminal section; belongs to the ribosome-inactivating protein family. Type 2 RIP subfamily. Heterotetramer of two A and two B chains.

It carries out the reaction Endohydrolysis of the N-glycosidic bond at one specific adenosine on the 28S rRNA.. The A chain is responsible for inhibiting protein synthesis through the catalytic inactivation of 60S ribosomal subunits by removing adenine from position 4,324 of 28S rRNA. Less toxic than abrin-a. In terms of biological role, the B chain is a galactose-specific lectin that facilitates the binding to the cell membrane that precedes endocytosis. This is Agglutinin-1 from Abrus precatorius (Indian licorice).